A 556-amino-acid polypeptide reads, in one-letter code: MTPEELSSAVSACLQDAVAAGELTVVDGVDLPEAKVERPKNRDHGDWATTVAMQVAKKVGRSPRDVAQILSERLARVPGVKTVDIAGPGFLNITLDAAAAGGLAQSVVEQGSAFGTGDALAGTTINLEFVSANPTGPIHLGGTRWAAVGDSLARVLQAQGAEVVREYYFNDHGNQIDRFARSLLARARGEAAPEDGYGGQYISDVAQEVLALHPDALESEDPQEVFRAAGVELMFAQIKSSLHEFGVDFDVFFHENSLFEDGQVEKLLEQLRSSDSLYFADGAWWLRSTEHGDDKDRVVIKSDGNAAYIAGDIAYFKNKRDRGADLCIYMLGADHHGYVARLKAAAAALGDSPDAVEVLIGQMVNLVRDGEAVRMSKRAGTVVTMEDLVEVVGVDAARYSLTRYSVDSNIDIDLDVLTRRSNENPVFYVQYAHARTCAVARNAEAAGVRRTDDAGAPQFDAALLSHPREADLLAALGQYPSVVAQAADFREPHRVARHLEALAGAYHRWYDACRVTPQGDGEVELVHHTRLWLNDAVRQVLANGLDLLGVSAPERM.

A 'HIGH' region motif is present at residues alanine 132 to glycine 142.

This sequence belongs to the class-I aminoacyl-tRNA synthetase family. Monomer.

Its subcellular location is the cytoplasm. The catalysed reaction is tRNA(Arg) + L-arginine + ATP = L-arginyl-tRNA(Arg) + AMP + diphosphate. The polypeptide is Arginine--tRNA ligase (Kocuria rhizophila (strain ATCC 9341 / DSM 348 / NBRC 103217 / DC2201)).